Reading from the N-terminus, the 588-residue chain is Thioredoxin domain-containing protein 3 (588 aa).

The 118-residue stretch at 2-119 folds into the Thioredoxin domain; that stretch reads ASKKREVQLQ…VINLIDEERK (118 aa). Residues C39 and C42 are joined by a disulfide bond. NDK regions lie at residues 157–257, 315–455, and 456–588; these read IAII…DQPE, LEKT…STLG, and LIKP…PEEN. Positions 230–261 are disordered; the sequence is GSKHNPPSEETEPQTDTEPNERSEDQPEVEAQ.

It in the C-terminal section; belongs to the NDK family. Monomer. Testis-specific. Expressed only in primary spermatocytes and round spermatids.

The protein localises to the cytoplasm. Probably required during the final stages of sperm tail maturation in the testis and/or epididymis, where extensive disulfide bonding of fibrous sheath (FS) proteins occurs. In vitro, it has neither nucleoside diphosphate kinase (NDPK) activity nor reducing activity on disulfide bonds. Exhibits a 3'-5' exonuclease activity with a preference for single-stranded DNA, suggesting roles in DNA proofreading and repair. This chain is Thioredoxin domain-containing protein 3, found in Homo sapiens (Human).